The sequence spans 139 residues: Pre-hexon-linking protein VIII (139 aa).

The propeptide occupies glycine 35–glycine 69.

This sequence belongs to the adenoviridae hexon-linking protein family. As to quaternary structure, interacts with the peripentonal hexons as well as the hexons in the facets. Part of a complex composed of the core-capsid bridging protein, the endosome lysis protein VI and the hexon-linking protein VIII; these interactions bridge the virus core to the capsid. Cleaved by the viral protease during virion maturation. May cause the middle segment to be shed from the capsid.

It is found in the host nucleus. It localises to the virion. Functionally, structural component of the virion that acts as a cement protein on the capsid interior and which glue the peripentonal hexons and group-of-nine hexons together. In Bovine adenovirus B serotype 3 (BAdV-3), this protein is Pre-hexon-linking protein VIII.